Reading from the N-terminus, the 347-residue chain is Transcription factor JunB (347 aa).

Glycyl lysine isopeptide (Lys-Gly) (interchain with G-Cter in SUMO2) cross-links involve residues Lys4, Lys33, and Lys36. The interval 51–73 (KAPGARGPGPEGGGGGSYFSGQG) is disordered. Over residues 56–68 (RGPGPEGGGGGSY) the composition is skewed to gly residues. Residue Lys81 forms a Glycyl lysine isopeptide (Lys-Gly) (interchain with G-Cter in SUMO2) linkage. Residues Thr102 and Thr104 each carry the phosphothreonine modification. Ser117 carries the phosphoserine modification. A Glycyl lysine isopeptide (Lys-Gly) (interchain with G-Cter in SUMO2) cross-link involves residue Lys141. The segment covering 239-253 (FKEEPQTVPEARSRD) has biased composition (basic and acidic residues). Positions 239-260 (FKEEPQTVPEARSRDATPPVSP) are disordered. Lys240 is modified (N6-acetyllysine; alternate). Residue Lys240 forms a Glycyl lysine isopeptide (Lys-Gly) (interchain with G-Cter in SUMO1); alternate linkage. Lys240 participates in a covalent cross-link: Glycyl lysine isopeptide (Lys-Gly) (interchain with G-Cter in SUMO2); alternate. Ser251 is modified (phosphoserine). Thr255 is modified (phosphothreonine). Ser259 bears the Phosphoserine mark. The tract at residues 268–295 (RIKVERKRLRNRLAATKCRKRKLERIAR) is basic motif. A bZIP domain is found at 268-331 (RIKVERKRLR…AQLKQKVMTH (64 aa)). Residues 296 to 324 (LEDKVKTLKAENAGLSSTAGLLREQVAQL) are leucine-zipper. A Glycyl lysine isopeptide (Lys-Gly) (interchain with G-Cter in SUMO2) cross-link involves residue Lys343.

Belongs to the bZIP family. Jun subfamily. As to quaternary structure, binds DNA as a homodimer or as a heterodimer with another member of the Jun/Fos family. Component of an AP-1 transcription factor complex composed of JUN-FOS heterodimers composed of JUN-FOS heterodimers. As part of the AP-1 transcription factor complex, forms heterodimers with FOSB, thereby binding to the AP-1 consensus sequence and stimulating transcription. Interacts with ITCH (via its WW domains). In terms of processing, ubiquitinated by ITCH, leading to its degradation.

The protein resides in the nucleus. Its function is as follows. Transcription factor involved in regulating gene activity following the primary growth factor response. Binds to the DNA sequence 5'-TGA[GC]TCA-3'. Heterodimerizes with proteins of the FOS family to form an AP-1 transcription complex, thereby enhancing its DNA binding activity to an AP-1 consensus sequence and its transcriptional activity. This is Transcription factor JunB (JUNB) from Homo sapiens (Human).